The primary structure comprises 267 residues: Putative transcription factor Ovo-like 1 (267 aa).

4 C2H2-type zinc fingers span residues 118 to 140 (FTCH…MKCH), 146 to 168 (HLCT…VRTH), 174 to 197 (YKCS…KKIH), and 213 to 235 (YVCE…LKEH).

Its subcellular location is the nucleus. Putative transcription factor. Involved in hair formation and spermatogenesis. May function in the differentiation and/or maintenance of the urogenital system. The chain is Putative transcription factor Ovo-like 1 (OVOL1) from Bos taurus (Bovine).